A 529-amino-acid polypeptide reads, in one-letter code: Peptide chain release factor 3 (529 aa).

The region spanning 7–275 (EQRRTFGIIS…AVVELAPSPR (269 aa)) is the tr-type G domain. GTP-binding positions include 16 to 23 (SHPDAGKT), 84 to 88 (DTPGH), and 138 to 141 (NKLD).

It belongs to the TRAFAC class translation factor GTPase superfamily. Classic translation factor GTPase family. PrfC subfamily.

It is found in the cytoplasm. In terms of biological role, increases the formation of ribosomal termination complexes and stimulates activities of RF-1 and RF-2. It binds guanine nucleotides and has strong preference for UGA stop codons. It may interact directly with the ribosome. The stimulation of RF-1 and RF-2 is significantly reduced by GTP and GDP, but not by GMP. The chain is Peptide chain release factor 3 from Syntrophus aciditrophicus (strain SB).